A 334-amino-acid chain; its full sequence is Glycerol-3-phosphate dehydrogenase [NAD(P)+] (334 aa).

The NADPH site is built by Tyr14 and Lys108. Sn-glycerol 3-phosphate contacts are provided by Lys108, Gly140, and Ser142. NADPH is bound at residue Ala144. The sn-glycerol 3-phosphate site is built by Lys195, Asp248, Ser258, Arg259, and Asn260. Lys195 serves as the catalytic Proton acceptor. Arg259 provides a ligand contact to NADPH. Glu285 contacts NADPH.

This sequence belongs to the NAD-dependent glycerol-3-phosphate dehydrogenase family.

Its subcellular location is the cytoplasm. It carries out the reaction sn-glycerol 3-phosphate + NAD(+) = dihydroxyacetone phosphate + NADH + H(+). The enzyme catalyses sn-glycerol 3-phosphate + NADP(+) = dihydroxyacetone phosphate + NADPH + H(+). Its pathway is membrane lipid metabolism; glycerophospholipid metabolism. In terms of biological role, catalyzes the reduction of the glycolytic intermediate dihydroxyacetone phosphate (DHAP) to sn-glycerol 3-phosphate (G3P), the key precursor for phospholipid synthesis. This Mesoplasma florum (strain ATCC 33453 / NBRC 100688 / NCTC 11704 / L1) (Acholeplasma florum) protein is Glycerol-3-phosphate dehydrogenase [NAD(P)+].